A 35-amino-acid chain; its full sequence is Beta-theraphotoxin-Hlv1a (35 aa).

3 disulfides stabilise this stretch: C2-C17, C9-C24, and C16-C31.

It belongs to the neurotoxin 10 (Hwtx-1) family. 10 (haplotoxin-1) subfamily. In terms of tissue distribution, expressed by the venom gland.

It is found in the secreted. In terms of biological role, spider venom neurotoxin that blocks voltage-gated sodium channel Nav1.3/SCN3A in human (IC(50)=1 uM) and rat (IC(50)=1 uM). In Cyriopagopus lividus (Cobalt blue tarantula), this protein is Beta-theraphotoxin-Hlv1a.